Here is a 159-residue protein sequence, read N- to C-terminus: Ribosome maturation factor RimM (159 aa).

The PRC barrel domain occupies 86-159 (SDAFHLPKLI…IHIETIEGLI (74 aa)).

It belongs to the RimM family. In terms of assembly, binds ribosomal protein uS19.

It localises to the cytoplasm. An accessory protein needed during the final step in the assembly of 30S ribosomal subunit, possibly for assembly of the head region. Essential for efficient processing of 16S rRNA. May be needed both before and after RbfA during the maturation of 16S rRNA. It has affinity for free ribosomal 30S subunits but not for 70S ribosomes. The sequence is that of Ribosome maturation factor RimM from Acholeplasma laidlawii (strain PG-8A).